A 312-amino-acid polypeptide reads, in one-letter code: GATA transcription factor 6 (312 aa).

Disordered regions lie at residues 1–33, 56–77, and 136–186; these read MESVELTLKNSNMKDKTLTGGAQNGDDFSVDDL, QRKRGVSDENTLHRSNDFSTAD, and KSQH…PLWL. Positions 56–71 are enriched in basic and acidic residues; that stretch reads QRKRGVSDENTLHRSN. Over residues 142–151 the composition is skewed to basic residues; the sequence is VKTRPKRART. Positions 143 to 150 match the Nuclear localization signal motif; the sequence is KTRPKRAR. The segment covering 157–186 has biased composition (low complexity); that stretch reads SHGSQSLTDSSSSSTTSSSSSPRPSSPLWL. A GATA-type zinc finger spans residues 217 to 271; it reads QTQTRQCGHCGVQKTPQWRAGPLGAKTLCNACGVRYKSGRLLPEYRPACSPTFSS.

The protein belongs to the type IV zinc-finger family. Class A subfamily.

The protein resides in the nucleus. Functionally, transcriptional activator that specifically binds 5'-GATA-3' or 5'-GAT-3' motifs within gene promoters. May be involved in the regulation of some light-responsive genes. This Arabidopsis thaliana (Mouse-ear cress) protein is GATA transcription factor 6 (GATA6).